The following is a 223-amino-acid chain: UPF0441 protein YgiB (223 aa).

The segment covering T178 to T195 has biased composition (low complexity). The disordered stretch occupies residues T178–G223. Polar residues predominate over residues A204 to G223.

The protein belongs to the UPF0441 family.

In Escherichia coli (strain ATCC 8739 / DSM 1576 / NBRC 3972 / NCIMB 8545 / WDCM 00012 / Crooks), this protein is UPF0441 protein YgiB.